Here is a 1029-residue protein sequence, read N- to C-terminus: Probable E3 ubiquitin protein ligase C167.07c (1029 aa).

The IQ domain occupies 46–75; that stretch reads AENNSVAVQSLSRGFLARRKFKQDFRERWI. Residues 692 to 1029 enclose the HECT domain; it reads FGKLLKGPIR…VRSGVGFGFS (338 aa). C997 acts as the Glycyl thioester intermediate in catalysis.

It localises to the cytoplasm. The protein localises to the nucleus. The catalysed reaction is S-ubiquitinyl-[E2 ubiquitin-conjugating enzyme]-L-cysteine + [acceptor protein]-L-lysine = [E2 ubiquitin-conjugating enzyme]-L-cysteine + N(6)-ubiquitinyl-[acceptor protein]-L-lysine.. Probable E3 ubiquitin-protein ligase which mediates ubiquitination and subsequent proteasomal degradation of target proteins. The polypeptide is Probable E3 ubiquitin protein ligase C167.07c (Schizosaccharomyces pombe (strain 972 / ATCC 24843) (Fission yeast)).